A 520-amino-acid polypeptide reads, in one-letter code: Ribonuclease Y (520 aa).

A helical membrane pass occupies residues 1-21 (MEILIIVIAAVVGLALGFAIA). One can recognise a KH domain in the interval 210–295 (CVSVFNLESD…EVVKKTRKQI (86 aa)). In terms of domain architecture, HD spans 336 to 429 (LLQHSREVAK…VQVCDAISGA (94 aa)).

The protein belongs to the RNase Y family.

The protein resides in the cell membrane. Functionally, endoribonuclease that initiates mRNA decay. This chain is Ribonuclease Y, found in Christiangramia forsetii (strain DSM 17595 / CGMCC 1.15422 / KT0803) (Gramella forsetii).